The following is a 724-amino-acid chain: Methionine--tRNA ligase (724 aa).

Residues 12 to 22 carry the 'HIGH' region motif; that stretch reads PYVNNIPHLGN. Zn(2+) is bound by residues C143, C146, C155, and C158. Positions 330–334 match the 'KMSKS' region motif; that stretch reads KFSKS. K333 provides a ligand contact to ATP. The region spanning 560-665 is the tRNA-binding domain; the sequence is FREKVLLRVV…KNPIAGERII (106 aa).

It belongs to the class-I aminoacyl-tRNA synthetase family. MetG type 1 subfamily. In terms of assembly, homodimer. Requires Zn(2+) as cofactor.

Its subcellular location is the cytoplasm. It catalyses the reaction tRNA(Met) + L-methionine + ATP = L-methionyl-tRNA(Met) + AMP + diphosphate. Is required not only for elongation of protein synthesis but also for the initiation of all mRNA translation through initiator tRNA(fMet) aminoacylation. This is Methionine--tRNA ligase from Borreliella afzelii (strain PKo) (Borrelia afzelii).